The primary structure comprises 136 residues: MACCATSFCGFPTCSTGGSSCCQPTCTQSSCCQPSCCEASCCQPSCCETGFGGGIGCGQEGGSGGVSCRVRWCRPDCRVEGTCLPPCCVVSCTPPTCCQLHHAQASCCRPSYCGQSCCRPACCCYCCQPSCSEPSC.

Repeat copies occupy residues 3 to 7, 21 to 25, 31 to 35, 36 to 40, 41 to 45, 46 to 50, 87 to 91, 97 to 101, 107 to 111, 117 to 121, and 126 to 130. Positions 21–130 are 11 X 5 AA repeats of C-C-[AEQVR]-[ALPTV]-[AGHST]; that stretch reads CCQPTCTQSS…ACCCYCCQPS (110 aa).

It belongs to the KRTAP type 9 family. Interacts with hair keratins.

Functionally, in the hair cortex, hair keratin intermediate filaments are embedded in an interfilamentous matrix, consisting of hair keratin-associated proteins (KRTAP), which are essential for the formation of a rigid and resistant hair shaft through their extensive disulfide bond cross-linking with abundant cysteine residues of hair keratins. The matrix proteins include the high-sulfur and high-glycine-tyrosine keratins. The protein is Keratin-associated protein 9-3 of Mus musculus (Mouse).